The following is a 187-amino-acid chain: Orotate phosphoribosyltransferase (187 aa).

Glu-110–Ser-118 contacts 5-phospho-alpha-D-ribose 1-diphosphate. Orotate-binding residues include Thr-114 and Arg-142.

The protein belongs to the purine/pyrimidine phosphoribosyltransferase family. PyrE subfamily. In terms of assembly, homodimer. It depends on Mg(2+) as a cofactor.

The enzyme catalyses orotidine 5'-phosphate + diphosphate = orotate + 5-phospho-alpha-D-ribose 1-diphosphate. Its pathway is pyrimidine metabolism; UMP biosynthesis via de novo pathway; UMP from orotate: step 1/2. Its function is as follows. Catalyzes the transfer of a ribosyl phosphate group from 5-phosphoribose 1-diphosphate to orotate, leading to the formation of orotidine monophosphate (OMP). The polypeptide is Orotate phosphoribosyltransferase (Thermotoga neapolitana (strain ATCC 49049 / DSM 4359 / NBRC 107923 / NS-E)).